Consider the following 247-residue polypeptide: tRNA pseudouridine synthase A (247 aa).

Catalysis depends on Asp53, which acts as the Nucleophile. Tyr112 serves as a coordination point for substrate.

It belongs to the tRNA pseudouridine synthase TruA family. In terms of assembly, homodimer.

The enzyme catalyses uridine(38/39/40) in tRNA = pseudouridine(38/39/40) in tRNA. Formation of pseudouridine at positions 38, 39 and 40 in the anticodon stem and loop of transfer RNAs. This chain is tRNA pseudouridine synthase A, found in Anaplasma marginale (strain St. Maries).